We begin with the raw amino-acid sequence, 446 residues long: Movement protein TGB1 (446 aa).

The tract at residues Asn-40–Arg-60 is disordered. Positions Lys-160–Ser-303 constitute a (+)RNA virus helicase ATP-binding domain. Gly-193–Ser-200 contacts ATP. The region spanning Asp-304–Glu-444 is the (+)RNA virus helicase C-terminal domain.

The protein belongs to the virgaviridae/benyvirus TGB1 movement protein family. As to quaternary structure, homooligomer. Interacts with movement protein TGB3. TGB1-TGB3-TGB2 complex formation is enhanced by ATP hydrolysis. Interacts with the suppressor of RNA silencing (via N-terminus). Mg(2+) serves as cofactor.

It is found in the host cell junction. The protein localises to the host plasmodesma. It localises to the host nucleus. The protein resides in the host cytoplasm. Its subcellular location is the host nucleolus. It is found in the host cytoskeleton. The catalysed reaction is ATP + H2O = ADP + phosphate + H(+). Its function is as follows. Participates in the transport of viral genome to neighboring plant cells directly through plasmodesmata, without any budding. Multifunctional movement protein with RNA-binding, ATPase and helicase activities. Engages in homologous interactions leading to the formation of a ribonucleoprotein complex containing plus-sense viral RNAs (vRNPs). ATPase activity is probably required for vRNPs movement complex assembly. Intracellular delivery of TGBp1-containing vRNPs to plasmodesmata is facilitated by TGBp2 and TGBp3. This is Movement protein TGB1 from Arachis hypogaea (Peanut).